The following is a 267-amino-acid chain: Non-homologous end joining protein Ku (267 aa).

Residues 10-190 (ISFGLVSFPV…TKYTAKELEL (181 aa)) form the Ku domain.

Belongs to the prokaryotic Ku family. As to quaternary structure, homodimer. Interacts with LigD.

Functionally, with LigD forms a non-homologous end joining (NHEJ) DNA repair enzyme, which repairs dsDNA breaks with reduced fidelity. Binds linear dsDNA with 5'- and 3'- overhangs but not closed circular dsDNA nor ssDNA. Recruits and stimulates the ligase activity of LigD. The chain is Non-homologous end joining protein Ku from Solibacter usitatus (strain Ellin6076).